A 118-amino-acid polypeptide reads, in one-letter code: UPF0295 protein BT9727_0449 (118 aa).

The next 2 helical transmembrane spans lie at 12 to 32 (IRTFALSLVFIGLFIAYLGVF) and 43 to 63 (FMMVGFLAVIASTVVYFWIGM).

It belongs to the UPF0295 family.

The protein localises to the cell membrane. This Bacillus thuringiensis subsp. konkukian (strain 97-27) protein is UPF0295 protein BT9727_0449.